A 212-amino-acid chain; its full sequence is Large ribosomal subunit protein mL48 (212 aa).

The N-terminal 28 residues, 1 to 28 (MSGTLEKVLCLRNNTIFKQAFSLLRFRT), are a transit peptide targeting the mitochondrion. Lys199 carries the N6-succinyllysine modification.

Belongs to the mitochondrion-specific ribosomal protein mL48 family. As to quaternary structure, component of the mitochondrial large ribosomal subunit (mt-LSU). Mature mammalian 55S mitochondrial ribosomes consist of a small (28S) and a large (39S) subunit. The 28S small subunit contains a 12S ribosomal RNA (12S mt-rRNA) and 30 different proteins. The 39S large subunit contains a 16S rRNA (16S mt-rRNA), a copy of mitochondrial valine transfer RNA (mt-tRNA(Val)), which plays an integral structural role, and 52 different proteins. mL48 is located at the central protuberance. Interacts with OXA1L.

It is found in the mitochondrion. This is Large ribosomal subunit protein mL48 (MRPL48) from Homo sapiens (Human).